Here is a 113-residue protein sequence, read N- to C-terminus: Large ribosomal subunit protein uL24 (113 aa).

This sequence belongs to the universal ribosomal protein uL24 family. As to quaternary structure, part of the 50S ribosomal subunit.

In terms of biological role, one of two assembly initiator proteins, it binds directly to the 5'-end of the 23S rRNA, where it nucleates assembly of the 50S subunit. Functionally, one of the proteins that surrounds the polypeptide exit tunnel on the outside of the subunit. The chain is Large ribosomal subunit protein uL24 from Chlamydia felis (strain Fe/C-56) (Chlamydophila felis).